Reading from the N-terminus, the 151-residue chain is Arginine repressor (151 aa).

It belongs to the ArgR family. In terms of assembly, homohexamer.

The protein localises to the cytoplasm. Its pathway is amino-acid biosynthesis; L-arginine biosynthesis [regulation]. Its function is as follows. Regulates arginine biosynthesis genes. The polypeptide is Arginine repressor (argR) (Haemophilus influenzae (strain ATCC 51907 / DSM 11121 / KW20 / Rd)).